We begin with the raw amino-acid sequence, 340 residues long: Nicotinate-nucleotide--dimethylbenzimidazole phosphoribosyltransferase (340 aa).

Residue Glu-305 is the Proton acceptor of the active site.

It belongs to the CobT family.

It catalyses the reaction 5,6-dimethylbenzimidazole + nicotinate beta-D-ribonucleotide = alpha-ribazole 5'-phosphate + nicotinate + H(+). It participates in nucleoside biosynthesis; alpha-ribazole biosynthesis; alpha-ribazole from 5,6-dimethylbenzimidazole: step 1/2. In terms of biological role, catalyzes the synthesis of alpha-ribazole-5'-phosphate from nicotinate mononucleotide (NAMN) and 5,6-dimethylbenzimidazole (DMB). This Allorhizobium ampelinum (strain ATCC BAA-846 / DSM 112012 / S4) (Agrobacterium vitis (strain S4)) protein is Nicotinate-nucleotide--dimethylbenzimidazole phosphoribosyltransferase.